We begin with the raw amino-acid sequence, 147 residues long: Siroheme decarboxylase NirG subunit (147 aa).

This sequence belongs to the Ahb/Nir family. As to quaternary structure, probably forms a complex composed of NirD, NirL, NirG and NirH. All proteins are required for the total conversion of siroheme to didecarboxysiroheme.

The enzyme catalyses siroheme + 2 H(+) = 12,18-didecarboxysiroheme + 2 CO2. The protein operates within porphyrin-containing compound metabolism. Its function is as follows. Involved in heme d1 biosynthesis. Catalyzes the decarboxylation of siroheme into didecarboxysiroheme. In Stutzerimonas stutzeri (Pseudomonas stutzeri), this protein is Siroheme decarboxylase NirG subunit.